The sequence spans 652 residues: Threonine--tRNA ligase (652 aa).

Residues Met-1–Thr-64 enclose the TGS domain. The catalytic stretch occupies residues Asp-245–Pro-542. 3 residues coordinate Zn(2+): Cys-338, His-389, and His-519.

The protein belongs to the class-II aminoacyl-tRNA synthetase family. In terms of assembly, homodimer. Requires Zn(2+) as cofactor.

Its subcellular location is the cytoplasm. It carries out the reaction tRNA(Thr) + L-threonine + ATP = L-threonyl-tRNA(Thr) + AMP + diphosphate + H(+). Functionally, catalyzes the attachment of threonine to tRNA(Thr) in a two-step reaction: L-threonine is first activated by ATP to form Thr-AMP and then transferred to the acceptor end of tRNA(Thr). Also edits incorrectly charged L-seryl-tRNA(Thr). The sequence is that of Threonine--tRNA ligase from Geobacillus kaustophilus (strain HTA426).